We begin with the raw amino-acid sequence, 187 residues long: UPF0340 protein SPT_0687 (187 aa).

Belongs to the UPF0340 family.

This Streptococcus pneumoniae (strain Taiwan19F-14) protein is UPF0340 protein SPT_0687.